The sequence spans 295 residues: sn-glycerol-3-phosphate transport system permease protein UgpA (295 aa).

Residues 1-11 lie on the Cytoplasmic side of the membrane; it reads MSSSRPVFRSR. A helical membrane pass occupies residues 12–32; that stretch reads WLPYLLVAPQLIITVIFFIWP. At 33–80 the chain is on the periplasmic side; that stretch reads AGEALWYSLQSVDPFGFSSQFVGLDNFVTLFHDSYYLDSFWTTIKFST. The 209-residue stretch at 76-284 folds into the ABC transmembrane type-1 domain; the sequence is IKFSTFVTVS…FLVIVLTVVQ (209 aa). The chain crosses the membrane as a helical span at residues 81–101; the sequence is FVTVSGLLVSLFFAALVEYIV. At 102–109 the chain is on the cytoplasmic side; the sequence is RGSRFYQT. Residues 110 to 130 form a helical membrane-spanning segment; sequence LMLLPYAVAPAVAAVLWIFLF. The Periplasmic segment spans residues 131-156; the sequence is NPGRGLITHFLAEFGYDWNHAQNSGQ. The chain crosses the membrane as a helical span at residues 157-177; it reads AMFLVVFASVWKQISYNFLFF. At 178 to 207 the chain is on the cytoplasmic side; the sequence is YAALQSIPRSLIEAAAIDGAGPIRRFFKIA. A helical transmembrane segment spans residues 208–228; the sequence is LPLIAPVSFFLLVVNLVYAFF. Topologically, residues 229-262 are periplasmic; the sequence is DTFPVIDAATSGGPVQATTTLIYKIYREGFTGLD. The helical transmembrane segment at 263 to 283 threads the bilayer; it reads LASSAAQSMVLMFLVIVLTVV. Topologically, residues 284-295 are cytoplasmic; it reads QFRYVESKVRYQ.

Belongs to the binding-protein-dependent transport system permease family. UgpAE subfamily. In terms of assembly, the complex is composed of two ATP-binding proteins (UgpC), two transmembrane proteins (UgpA and UgpE) and a solute-binding protein (UgpB).

It localises to the cell inner membrane. Functionally, part of the ABC transporter complex UgpBAEC involved in sn-glycerol-3-phosphate (G3P) import. Probably responsible for the translocation of the substrate across the membrane. This Shigella flexneri protein is sn-glycerol-3-phosphate transport system permease protein UgpA (ugpA).